We begin with the raw amino-acid sequence, 495 residues long: Glycogen synthase (495 aa).

Lys15 lines the ADP-alpha-D-glucose pocket.

It belongs to the glycosyltransferase 1 family. Bacterial/plant glycogen synthase subfamily.

It carries out the reaction [(1-&gt;4)-alpha-D-glucosyl](n) + ADP-alpha-D-glucose = [(1-&gt;4)-alpha-D-glucosyl](n+1) + ADP + H(+). It participates in glycan biosynthesis; glycogen biosynthesis. Functionally, synthesizes alpha-1,4-glucan chains using ADP-glucose. In Variovorax paradoxus (strain S110), this protein is Glycogen synthase.